A 200-amino-acid polypeptide reads, in one-letter code: ATP-dependent Clp protease proteolytic subunit (200 aa).

Ser-97 (nucleophile) is an active-site residue. The active site involves His-122.

Belongs to the peptidase S14 family. Fourteen ClpP subunits assemble into 2 heptameric rings which stack back to back to give a disk-like structure with a central cavity, resembling the structure of eukaryotic proteasomes.

Its subcellular location is the cytoplasm. It carries out the reaction Hydrolysis of proteins to small peptides in the presence of ATP and magnesium. alpha-casein is the usual test substrate. In the absence of ATP, only oligopeptides shorter than five residues are hydrolyzed (such as succinyl-Leu-Tyr-|-NHMec, and Leu-Tyr-Leu-|-Tyr-Trp, in which cleavage of the -Tyr-|-Leu- and -Tyr-|-Trp bonds also occurs).. Functionally, cleaves peptides in various proteins in a process that requires ATP hydrolysis. Has a chymotrypsin-like activity. Plays a major role in the degradation of misfolded proteins. The protein is ATP-dependent Clp protease proteolytic subunit of Oleidesulfovibrio alaskensis (strain ATCC BAA-1058 / DSM 17464 / G20) (Desulfovibrio alaskensis).